Reading from the N-terminus, the 371-residue chain is Cytokine receptor-like factor 2 (371 aa).

A signal peptide spans Met-1–Gly-22. Residues Gln-23–Lys-231 lie on the Extracellular side of the membrane. N-linked (GlcNAc...) asparagine glycans are attached at residues Asn-47 and Asn-55. Cys-71 and Cys-84 form a disulfide bridge. N-linked (GlcNAc...) asparagine glycosylation is found at Asn-101 and Asn-169. Residues Lys-118 to Arg-211 form the Fibronectin type-III domain. An intrachain disulfide couples Cys-180 to Cys-218. The WSXWS motif signature appears at Pro-200–Ser-204. The chain crosses the membrane as a helical span at residues Phe-232 to Trp-252. The Cytoplasmic portion of the chain corresponds to Lys-253–Leu-371. Positions Leu-261–Lys-269 match the Box 1 motif motif. Residues Glu-322–Ala-336 are compositionally biased toward basic and acidic residues. The tract at residues Glu-322 to Pro-347 is disordered.

It belongs to the type I cytokine receptor family. Type 5 subfamily. As to quaternary structure, heterodimer of CRLF2 and IL7R. As to expression, expressed in heart, skeletal muscle, kidney and adult and fetal liver. Primarily expressed in dendrites and monocytes. Weakly expressed in T-cells.

The protein localises to the cell membrane. Its subcellular location is the secreted. Receptor for thymic stromal lymphopoietin (TSLP). Forms a functional complex with TSLP and IL7R which is capable of stimulating cell proliferation through activation of STAT3 and STAT5. Also activates JAK2. Implicated in the development of the hematopoietic system. This is Cytokine receptor-like factor 2 (CRLF2) from Homo sapiens (Human).